Reading from the N-terminus, the 468-residue chain is Tyrosine-protein phosphatase YopH (468 aa).

A disordered region spans residues 127–194 (ARGHVSSHSH…TVSPYGPEAR (68 aa)). Residues 130–141 (HVSSHSHSALHA) are compositionally biased toward low complexity. One can recognise a Tyrosine-protein phosphatase domain in the interval 152–461 (SHLDPRTPPL…DVLIKLAEGQ (310 aa)). The active-site Phosphocysteine intermediate is C403.

It belongs to the protein-tyrosine phosphatase family. Non-receptor class subfamily.

It is found in the secreted. The enzyme catalyses O-phospho-L-tyrosyl-[protein] + H2O = L-tyrosyl-[protein] + phosphate. Essential virulence determinant. This protein is a protein tyrosine phosphatase. The essential function of YopH in Yersinia pathogenesis is host-protein dephosphorylation. It contributes to the ability of the bacteria to resist phagocytosis by peritoneal macrophages. This is Tyrosine-protein phosphatase YopH (yopH) from Yersinia pseudotuberculosis serotype I (strain IP32953).